We begin with the raw amino-acid sequence, 406 residues long: NADH-ubiquinone oxidoreductase 49 kDa subunit (406 aa).

It belongs to the complex I 49 kDa subunit family. Complex I is composed of 45 different subunits. Component of the iron-sulfur (IP) fragment of the enzyme.

Its subcellular location is the mitochondrion inner membrane. The catalysed reaction is a ubiquinone + NADH + 5 H(+)(in) = a ubiquinol + NAD(+) + 4 H(+)(out). Core subunit of the mitochondrial membrane respiratory chain NADH dehydrogenase (Complex I) that is believed to belong to the minimal assembly required for catalysis. Complex I functions in the transfer of electrons from NADH to the respiratory chain. The immediate electron acceptor for the enzyme is believed to be ubiquinone. The polypeptide is NADH-ubiquinone oxidoreductase 49 kDa subunit (nad7) (Dictyostelium citrinum (Slime mold)).